The sequence spans 185 residues: Threonylcarbamoyl-AMP synthase (185 aa).

One can recognise a YrdC-like domain in the interval 3–185 (EQAPAEVKQV…IDAISGKILR (183 aa)).

This sequence belongs to the SUA5 family. TsaC subfamily.

It localises to the cytoplasm. It carries out the reaction L-threonine + hydrogencarbonate + ATP = L-threonylcarbamoyladenylate + diphosphate + H2O. Its function is as follows. Required for the formation of a threonylcarbamoyl group on adenosine at position 37 (t(6)A37) in tRNAs that read codons beginning with adenine. Catalyzes the conversion of L-threonine, HCO(3)(-)/CO(2) and ATP to give threonylcarbamoyl-AMP (TC-AMP) as the acyladenylate intermediate, with the release of diphosphate. The protein is Threonylcarbamoyl-AMP synthase of Shewanella woodyi (strain ATCC 51908 / MS32).